A 421-amino-acid chain; its full sequence is Magnesium transporter MRS2-5 (421 aa).

2 helical membrane passes run 357 to 377 (LLLT…AVFG) and 393 to 413 (YVLL…VLYF). The Required for magnesium transport activity signature appears at 377-379 (GMN).

Belongs to the CorA metal ion transporter (MIT) (TC 1.A.35.5) family. Expressed in the whole plant.

Its subcellular location is the membrane. Magnesium transporter that may mediate the influx of magnesium. This Arabidopsis thaliana (Mouse-ear cress) protein is Magnesium transporter MRS2-5 (MRS2-5).